A 123-amino-acid chain; its full sequence is Putative iron-sulfur cluster insertion protein ErpA (123 aa).

The iron-sulfur cluster site is built by C51, C115, and C117.

Belongs to the HesB/IscA family. Homodimer. Iron-sulfur cluster is required as a cofactor.

In terms of biological role, required for insertion of 4Fe-4S clusters. This is Putative iron-sulfur cluster insertion protein ErpA from Bordetella bronchiseptica (strain ATCC BAA-588 / NCTC 13252 / RB50) (Alcaligenes bronchisepticus).